The following is a 542-amino-acid chain: Phosphoacetylglucosamine mutase (542 aa).

Met1 is subject to N-acetylmethionine. Phosphothreonine is present on Thr62. Ser64 serves as the catalytic Phosphoserine intermediate. The Mg(2+) site is built by Ser64, Asp276, Asp278, and Asp280. Ser64 carries the phosphoserine modification. Substrate is bound by residues Glu370 to Asn372, Arg496 to Thr500, and Arg505.

The protein belongs to the phosphohexose mutase family. Mg(2+) serves as cofactor. Found in many tissues except lung. Relatively high expression in pancreas, heart, liver, and placenta, and relatively low expression in brain, skeletal muscle and kidney.

It catalyses the reaction N-acetyl-alpha-D-glucosamine 1-phosphate = N-acetyl-D-glucosamine 6-phosphate. It functions in the pathway nucleotide-sugar biosynthesis; UDP-N-acetyl-alpha-D-glucosamine biosynthesis; N-acetyl-alpha-D-glucosamine 1-phosphate from alpha-D-glucosamine 6-phosphate (route I): step 2/2. Its function is as follows. Catalyzes the conversion of GlcNAc-6-P into GlcNAc-1-P during the synthesis of uridine diphosphate/UDP-GlcNAc, a sugar nucleotide critical to multiple glycosylation pathways including protein N- and O-glycosylation. The polypeptide is Phosphoacetylglucosamine mutase (Homo sapiens (Human)).